Reading from the N-terminus, the 426-residue chain is LIM/homeobox protein Lhx2 (426 aa).

Over residues 14–24 (VIDEMDRRQER) the composition is skewed to basic and acidic residues. Positions 14-42 (VIDEMDRRQERGSGISSAIDRGDTETTMP) are disordered. LIM zinc-binding domains follow at residues 52–104 (CAGC…CKED) and 114–167 (CARC…CRLH). The segment at 248–268 (DAEHLDRDQPYPSSQKTKRMR) is disordered. A DNA-binding region (homeobox) is located at residues 264 to 323 (TKRMRTSFKHHQLRTMKSYFAINHNPDAKDLKQLAQKTGLTKRVLQVWFQNARAKFRRNL). Residues 305–321 (KRVLQVWFQNARAKFRR) carry the Nuclear localization signal motif. The span at 326 to 354 (QENTGVDKTSDATLQTGTPSGPASELSNA) shows a compositional bias: polar residues. Residues 326 to 370 (QENTGVDKTSDATLQTGTPSGPASELSNASLSPSSTPTTLTDLTS) are disordered. The segment covering 355-370 (SLSPSSTPTTLTDLTS) has biased composition (low complexity).

Interacts (via LIM domains) with CITED2. Interacts with POU4F2. Found in discrete regions of the developing CNS, primarily in diencephalic and telencephalic structures and a subset of lymphoid tissues. Also found in embryonic spinal cord and fetal liver.

It localises to the nucleus. Functionally, acts as a transcriptional activator. Stimulates the promoter of the alpha-glycoprotein gene. Transcriptional regulatory protein involved in the control of cell differentiation in developing lymphoid and neural cell types. This Rattus norvegicus (Rat) protein is LIM/homeobox protein Lhx2 (Lhx2).